Here is a 419-residue protein sequence, read N- to C-terminus: Effector protein BipC (419 aa).

2 disordered regions span residues 62–91 and 338–402; these read VAGS…TVSG and LQSG…AKSQ. 2 stretches are compositionally biased toward basic and acidic residues: residues 71–91 and 380–392; these read ELAR…TVSG and TRDE…REAA.

Belongs to the SctB/SipC family.

The protein localises to the secreted. This chain is Effector protein BipC (bipC), found in Burkholderia pseudomallei (strain 1106a).